A 572-amino-acid polypeptide reads, in one-letter code: MQVELIIKNLKVYNSYFKKFIKSDVLINEGKFLHIGKGYEDRLWSENIIDGEDKYIIPGLIDIHMHIESSMTIPREFSKAAIKHGVTTVVADPHEIANVFGVRGIEEFIKFKGNLDIFYGIPSSVPSTSSSLETTGEKITHNEVKRLLEYDNIICLGEVMNFKDLIEDDDSNINKIINISKEKNIPLEGHCPKIQGVDLSLYIYRGVNGDHTQQSVGSLQEKIQNGMFIEMQHKSMTLENIKFLIENNLYEHFALVTDDVMADKLVKGHLDEILKEAVKLGMSIENAIYASTYTPARRMNLLDRGTIAPGKLADFILLDSIEDFNIYEVYKNGEMVFNRDKGLKEEFFEDKSKLDYRFYNSIELNNITKESLEVKVPNKYKNKVNCRTMKVLKNTTFTEEGEVTLNVYNNILQWEKSSCALIAVFERYGKNNNISFGLVEGEIIKEGAIATTWAHDHHNLMVMGRNISDMTIAANEVINSRGGYVVSKNNEVIAKLELPIGGIISDEPIEIIGEKLGEVRNAMRDLGYNHMNEIMSFSTLSLPVSPALKITDKGLIDVKKGSIVSLFKKGLY.

Belongs to the metallo-dependent hydrolases superfamily. Adenine deaminase family. The cofactor is Mn(2+).

It carries out the reaction adenine + H2O + H(+) = hypoxanthine + NH4(+). The polypeptide is Adenine deaminase (Clostridium perfringens (strain 13 / Type A)).